Consider the following 666-residue polypeptide: Pantothenate kinase 1 (666 aa).

It belongs to the type II pantothenate kinase family.

The catalysed reaction is (R)-pantothenate + ATP = (R)-4'-phosphopantothenate + ADP + H(+). It functions in the pathway cofactor biosynthesis; coenzyme A biosynthesis; CoA from (R)-pantothenate: step 1/5. Regulated by feedback inhibition by malonyl-CoA. Its function is as follows. Catalyzes the phosphorylation of pantothenate the first step in CoA biosynthesis. May play a role in the physiological regulation of the intracellular CoA concentration. The protein is Pantothenate kinase 1 of Oryza sativa subsp. japonica (Rice).